A 550-amino-acid polypeptide reads, in one-letter code: Chaperonin GroEL (550 aa).

ATP-binding positions include 30-33, Lys51, 87-91, Gly415, 479-481, and Asp495; these read TLGP, DGTTT, and NAA.

It belongs to the chaperonin (HSP60) family. As to quaternary structure, forms a cylinder of 14 subunits composed of two heptameric rings stacked back-to-back. Interacts with the co-chaperonin GroES.

The protein resides in the cytoplasm. The catalysed reaction is ATP + H2O + a folded polypeptide = ADP + phosphate + an unfolded polypeptide.. In terms of biological role, together with its co-chaperonin GroES, plays an essential role in assisting protein folding. The GroEL-GroES system forms a nano-cage that allows encapsulation of the non-native substrate proteins and provides a physical environment optimized to promote and accelerate protein folding. The protein is Chaperonin GroEL of Polynucleobacter asymbioticus (strain DSM 18221 / CIP 109841 / QLW-P1DMWA-1) (Polynucleobacter necessarius subsp. asymbioticus).